We begin with the raw amino-acid sequence, 512 residues long: ATP synthase subunit alpha (512 aa).

G170–T177 is a binding site for ATP.

The protein belongs to the ATPase alpha/beta chains family. As to quaternary structure, F-type ATPases have 2 components, CF(1) - the catalytic core - and CF(0) - the membrane proton channel. CF(1) has five subunits: alpha(3), beta(3), gamma(1), delta(1), epsilon(1). CF(0) has three main subunits: a(1), b(2) and c(9-12). The alpha and beta chains form an alternating ring which encloses part of the gamma chain. CF(1) is attached to CF(0) by a central stalk formed by the gamma and epsilon chains, while a peripheral stalk is formed by the delta and b chains.

It is found in the cell inner membrane. It carries out the reaction ATP + H2O + 4 H(+)(in) = ADP + phosphate + 5 H(+)(out). Produces ATP from ADP in the presence of a proton gradient across the membrane. The alpha chain is a regulatory subunit. This chain is ATP synthase subunit alpha, found in Solibacter usitatus (strain Ellin6076).